The following is a 151-amino-acid chain: Actin-depolymerizing factor 10 (151 aa).

The ADF-H domain occupies 15-149; the sequence is PAWIEVPEKS…DLEVLRGRAN (135 aa).

This sequence belongs to the actin-binding proteins ADF family.

Its function is as follows. Actin-depolymerizing protein. Severs actin filaments (F-actin) and binds to actin monomers. This chain is Actin-depolymerizing factor 10 (ADF10), found in Oryza sativa subsp. japonica (Rice).